A 458-amino-acid polypeptide reads, in one-letter code: UDP-N-acetylmuramate--L-alanine ligase (458 aa).

115–121 contributes to the ATP binding site; the sequence is GSHGKTT.

The protein belongs to the MurCDEF family.

The protein localises to the cytoplasm. It catalyses the reaction UDP-N-acetyl-alpha-D-muramate + L-alanine + ATP = UDP-N-acetyl-alpha-D-muramoyl-L-alanine + ADP + phosphate + H(+). It participates in cell wall biogenesis; peptidoglycan biosynthesis. In terms of biological role, cell wall formation. This chain is UDP-N-acetylmuramate--L-alanine ligase, found in Anaeromyxobacter dehalogenans (strain 2CP-1 / ATCC BAA-258).